A 126-amino-acid chain; its full sequence is MNLIAQLEAEQIAALGKDIPDFKAGDTVRVGYKVTEGTRTRVQMYEGVVISRKGGGIGASFTVRKISFGEGVERVFPLYSTNIDSITVVRRGRVRRAKLYYLRDRRGKSARIAEVSNYKPKADAKA.

Belongs to the bacterial ribosomal protein bL19 family.

This protein is located at the 30S-50S ribosomal subunit interface and may play a role in the structure and function of the aminoacyl-tRNA binding site. This chain is Large ribosomal subunit protein bL19, found in Paracoccus denitrificans (strain Pd 1222).